Consider the following 459-residue polypeptide: MLGAVKMEGHEPSDWSSYYAEPEGYSSVSNMNAGLGMNGMNTYMSMSAAAMGGGSGNMSAGSMNMSSYVGAGMSPSLAGMSPGAGAMAGMSGSAGAAGVAGMGPHLSPSLSPLGGQAAGAMGGLAPYANMNSMSPMYGQAGLSRARDPKTYRRSYTHAKPPYSYISLITMAIQQSPNKMLTLSEIYQWIMDLFPFYRQNQQRWQNSIRHSLSFNDCFLKVPRSPDKPGKGSFWTLHPDSGNMFENGCYLRRQKRFKCEKQLALKEAAGAASSGGKKTAPGSQASQAQLGEAAGSASETPAGTESPHSSASPCQEHKRGGLSELKGAPASALSPPEPAPSPGQQQQAAAHLLGPPHHPGLPPEAHLKPEHHYAFNHPFSINNLMSSEQQHHHSHHHHQPHKMDLKAYEQVMHYPGGYGSPMPGSLAMGPVTNKAGLDASPLAADTSYYQGVYSRPIMNSS.

The tract at residues 14 to 93 is transactivation domain 1; the sequence is DWSSYYAEPE…AGAMAGMSGS (80 aa). Positions 106–113 match the Nuclear localization signal motif; the sequence is LSPSLSPL. Position 156 is a phosphothreonine (threonine 156). A DNA-binding region (fork-head) is located at residues 159-252; sequence KPPYSYISLI…FENGCYLRRQ (94 aa). Serine 212 carries the phosphoserine modification. The span at 268–281 shows a compositional bias: low complexity; that stretch reads GAASSGGKKTAPGS. The interval 268–366 is disordered; sequence GAASSGGKKT…PGLPPEAHLK (99 aa). Serine 284 bears the Phosphoserine mark. Residues 295–311 are compositionally biased toward polar residues; sequence ASETPAGTESPHSSASP. A Phosphothreonine modification is found at threonine 302. Residues serine 304, serine 307, serine 308, and serine 310 each carry the phosphoserine modification. Low complexity predominate over residues 340–353; the sequence is PGQQQQAAAHLLGP. Residues 362–459 are transactivation domain 2; sequence EAHLKPEHHY…VYSRPIMNSS (98 aa). Phosphoserine is present on residues serine 438 and serine 459.

As to quaternary structure, binds DNA as a monomer. Binds TLE1. Interacts with FOXA1 and FOXA3. Interacts with PRKDC. Interacts with AKT1. Interacts with TET1; this interaction may recruit TET1 to specific genomic loci to mediate their demethylation. Phosphorylation on Thr-156 abolishes binding to target promoters and subsequent transcription activation upon insulin stimulation. Restricted mainly to endoderm-derived tissues (lung, liver, stomach, and small intestine). Expressed in epididymis with region-specific expression pattern: no expression is observed in initial segment, low expression in proximal caput, gradiently higher levels of expression in middle and distal caput and highest level in corpus and cauda (at protein level).

The protein localises to the nucleus. The protein resides in the cytoplasm. Transcription factor that is involved in embryonic development, establishment of tissue-specific gene expression and regulation of gene expression in differentiated tissues. Is thought to act as a 'pioneer' factor opening the compacted chromatin for other proteins through interactions with nucleosomal core histones and thereby replacing linker histones at target enhancer and/or promoter sites. Binds DNA with the consensus sequence 5'-[AC]A[AT]T[AG]TT[GT][AG][CT]T[CT]-3'. In embryonic development is required for notochord formation. Involved in the development of multiple endoderm-derived organ systems such as the liver, pancreas and lungs; Foxa1 and Foxa2 seem to have at least in part redundant roles. FOXA1 and FOXA2 are essential for hepatic specification. FOXA1 and FOXA2 are required for morphogenesis and cell differentiation during formation of the lung. FOXA1 and FOXA2 are involved in bile duct formation; they positively regulate the binding glucocorticoid receptor/NR3C1 to the IL6 promoter. FOXA1 and FOXA2 regulate multiple phases of midbrain dopaminergic neuron development; they regulate expression of NEUROG2 at the beginning of mDA neurogenesis and of NR4A2 and EN1 in immature mDA neurons. Modulates the transcriptional activity of nuclear hormone receptors; inhibits AR-mediated transcription from the LCN5 promoter. Binds to fibrinogen beta promoter and is involved in IL6-induced fibrinogen beta transcriptional activation. Originally described as a transcription activator for a number of liver genes such as AFP, albumin, tyrosine aminotransferase, PEPCK, etc. Interacts with the cis-acting regulatory regions of these genes. Involved in glucose homeostasis; regulates the expression of genes important for glucose sensing in pancreatic beta-cells and glucose homeostasis. In pancreatic beta cells activates transcription of potassium channel subunits KCNJ11 and ABCC8. Involved in regulation of fat metabolism; activates transcriptional programs of lipid metabolism and ketogenesis at low insulin state. Involved in transcriptional regulation of MUC2 in the intestine. In Mus musculus (Mouse), this protein is Hepatocyte nuclear factor 3-beta (Foxa2).